The chain runs to 307 residues: Pantothenate kinase (307 aa).

Residue 90–97 coordinates ATP; sequence GSVAVGKS.

Belongs to the prokaryotic pantothenate kinase family.

The protein resides in the cytoplasm. The enzyme catalyses (R)-pantothenate + ATP = (R)-4'-phosphopantothenate + ADP + H(+). It functions in the pathway cofactor biosynthesis; coenzyme A biosynthesis; CoA from (R)-pantothenate: step 1/5. The chain is Pantothenate kinase from Enterococcus faecalis (strain ATCC 700802 / V583).